Here is a 751-residue protein sequence, read N- to C-terminus: 1,3-beta-galactosyl-N-acetylhexosamine phosphorylase (751 aa).

The active-site Proton donor is the aspartate 313.

It belongs to the glycoside hydrolase 112 family. In terms of assembly, homodimer.

The enzyme catalyses beta-D-galactosyl-(1-&gt;3)-N-acetyl-D-glucosamine + phosphate = alpha-D-galactose 1-phosphate + N-acetyl-D-glucosamine. In terms of biological role, reversibly phosphorolyzes lacto-N-biose to Gal1-P and N-acetylglucosamine (GlcNAc) and galacto-N-biose to Gal1-P and N-acetylgalactosamine (GalNAc). Involved in the lacto-N-biose I/galacto-N-biose (LNB/GNB) degradation pathway, which is important for host intestinal colonization by bifidobacteria. In Bifidobacterium longum subsp. longum (strain ATCC 15707 / DSM 20219 / JCM 1217 / NCTC 11818 / E194b), this protein is 1,3-beta-galactosyl-N-acetylhexosamine phosphorylase (lnpA).